Reading from the N-terminus, the 346-residue chain is Probable choline kinase 1 (346 aa).

Residues R73, Q210, and D227 each coordinate ATP.

This sequence belongs to the choline/ethanolamine kinase family. Expressed in roots. Expressed at low levels in cauline leaves and flowers.

It carries out the reaction choline + ATP = phosphocholine + ADP + H(+). It functions in the pathway phospholipid metabolism; phosphatidylcholine biosynthesis; phosphocholine from choline: step 1/1. Involved in phospholipid biosynthesis. Catalyzes the first step in phosphatidylcholine biosynthesis. This chain is Probable choline kinase 1 (CK1), found in Arabidopsis thaliana (Mouse-ear cress).